Consider the following 431-residue polypeptide: 3'3'-cGAMP-specific phosphodiesterase 1 (431 aa).

Positions 39 to 155 constitute an HD domain; the sequence is DINHGHRVGY…IFLADRVDYL (117 aa). The 197-residue stretch at 231–427 folds into the HD-GYP domain; the sequence is GVEEIMSIAM…YYQLSIAESP (197 aa). Positions 288 and 289 each coordinate a divalent metal cation. Lysine 292 acts as the Proton donor in catalysis. A divalent metal cation contacts are provided by histidine 317, histidine 341, histidine 342, and aspartate 370.

In terms of assembly, monomer. Requires Ca(2+) as cofactor. Mg(2+) serves as cofactor.

It carries out the reaction 3',3'-cGAMP + H2O = 5'-pApG-3' + H(+). The catalysed reaction is 5'-pApG-3' + H2O = 5'-ApG-3' + phosphate. Its function is as follows. Phosphodiesterase (PDE) that catalyzes the hydrolysis of 3'3'-cyclic GMP-AMP (3'3'-cGAMP), leading to linear 5'-pApG. Also displays 5'-nucleotidase activity, further hydrolyzing 5'-pApG to 5'-ApG. Counteracts the function of the 3'3'-cGAMP synthase DncV, and is involved in the modulation of intracellular 3'3'-cGAMP levels. Enhances bacterial chemotaxis and inhibits intestinal colonization in vivo. Thus exerts a crucial role in regulating bacterial infectivity through catalyzing 3'3'-cGAMP degradation. Is specific for 3'3'-cGAMP since it cannot degrade other cGAMP linkage isomers (3'2'-, 2'3'-, and 2'2'-cGAMPs). Is also able to hydrolyze c-di-GMP but not c-di-AMP. The chain is 3'3'-cGAMP-specific phosphodiesterase 1 from Vibrio cholerae serotype O1 (strain ATCC 39315 / El Tor Inaba N16961).